Reading from the N-terminus, the 101-residue chain is Chaperone modulatory protein CbpM (101 aa).

This sequence belongs to the CbpM family.

Its function is as follows. Interacts with CbpA and inhibits both the DnaJ-like co-chaperone activity and the DNA binding activity of CbpA. Together with CbpA, modulates the activity of the DnaK chaperone system. Does not inhibit the co-chaperone activity of DnaJ. In Pseudomonas putida (strain GB-1), this protein is Chaperone modulatory protein CbpM.